The chain runs to 496 residues: Signal recognition particle subunit SRP54 1 (496 aa).

Residues 1-296 form a G-domain region; sequence MVLAQLGGSI…DVKPFVSRLL (296 aa). GTP contacts are provided by residues 108–115, 191–195, and 249–252; these read GLQGSGKT, DTSGR, and TKMD. Residues 297-496 form an M-domain region; it reads GMGDLSGLVN…MGMFGGGGGE (200 aa).

This sequence belongs to the GTP-binding SRP family. SRP54 subfamily. In terms of assembly, component of a signal recognition particle (SRP) complex that consists of a 7SL RNA molecule of 300 nucleotides and six protein subunits: SRP72, SRP68, SRP54, SRP19, SRP14 and SRP9.

It localises to the cytoplasm. The protein localises to the endoplasmic reticulum. The catalysed reaction is GTP + H2O = GDP + phosphate + H(+). Its function is as follows. Component of the signal recognition particle (SRP) complex, a ribonucleoprotein complex that mediates the cotranslational targeting of secretory and membrane proteins to the endoplasmic reticulum (ER). As part of the SRP complex, associates with the SRP receptor (SR) component SRPRA to target secretory proteins to the endoplasmic reticulum membrane. Binds to the signal sequence of presecretory proteins when they emerge from the ribosomes. Displays basal GTPase activity, and stimulates reciprocal GTPase activation of the SR subunit SRPRA. Forms a guanosine 5'-triphosphate (GTP)-dependent complex with the SR subunit SRPRA. SR compaction and GTPase mediated rearrangement of SR drive SRP-mediated cotranslational protein translocation into the ER. Requires the presence of SRP9/SRP14 and/or SRP19 to stably interact with RNA. This Solanum lycopersicum (Tomato) protein is Signal recognition particle subunit SRP54 1.